Reading from the N-terminus, the 206-residue chain is Endoribonuclease YbeY (206 aa).

The segment at 1–20 is disordered; sequence MSQANHNDTHNNIDDNINNH. Zn(2+) contacts are provided by histidine 168, histidine 172, and histidine 178.

This sequence belongs to the endoribonuclease YbeY family. The cofactor is Zn(2+).

Its subcellular location is the cytoplasm. Single strand-specific metallo-endoribonuclease involved in late-stage 70S ribosome quality control and in maturation of the 3' terminus of the 16S rRNA. The chain is Endoribonuclease YbeY from Psychrobacter arcticus (strain DSM 17307 / VKM B-2377 / 273-4).